A 239-amino-acid polypeptide reads, in one-letter code: Ribonuclease PH (239 aa).

Residues Arg86 and Gly124–Arg126 each bind phosphate.

It belongs to the RNase PH family. As to quaternary structure, homohexameric ring arranged as a trimer of dimers.

It carries out the reaction tRNA(n+1) + phosphate = tRNA(n) + a ribonucleoside 5'-diphosphate. Functionally, phosphorolytic 3'-5' exoribonuclease that plays an important role in tRNA 3'-end maturation. Removes nucleotide residues following the 3'-CCA terminus of tRNAs; can also add nucleotides to the ends of RNA molecules by using nucleoside diphosphates as substrates, but this may not be physiologically important. Probably plays a role in initiation of 16S rRNA degradation (leading to ribosome degradation) during starvation. In Azoarcus sp. (strain BH72), this protein is Ribonuclease PH.